The chain runs to 143 residues: Regulator of ribonuclease activity B (143 aa).

Residues 117 to 135 (DPDAEYDDEDGENEDDESE) show a composition bias toward acidic residues. The tract at residues 117–143 (DPDAEYDDEDGENEDDESESDKSSRLH) is disordered.

It belongs to the RraB family. In terms of assembly, interacts with the C-terminal region of Rne.

The protein localises to the cytoplasm. Its function is as follows. Globally modulates RNA abundance by binding to RNase E (Rne) and regulating its endonucleolytic activity. Can modulate Rne action in a substrate-dependent manner by altering the composition of the degradosome. This chain is Regulator of ribonuclease activity B, found in Proteus mirabilis (strain HI4320).